We begin with the raw amino-acid sequence, 129 residues long: Glycine cleavage system H protein (129 aa).

The region spanning 24–106 (AVRIGLSAYA…HGEGWLLVIQ (83 aa)) is the Lipoyl-binding domain. K65 carries the post-translational modification N6-lipoyllysine.

This sequence belongs to the GcvH family. The glycine cleavage system is composed of four proteins: P, T, L and H. (R)-lipoate serves as cofactor.

In terms of biological role, the glycine cleavage system catalyzes the degradation of glycine. The H protein shuttles the methylamine group of glycine from the P protein to the T protein. The protein is Glycine cleavage system H protein of Synechococcus sp. (strain WH7803).